A 360-amino-acid chain; its full sequence is Peptide chain release factor 1 (360 aa).

Q235 carries the N5-methylglutamine modification. A disordered region spans residues 284-313 (AKRQQAEASTRRNLLGSGDRSDRNRTYNFP).

This sequence belongs to the prokaryotic/mitochondrial release factor family. Methylated by PrmC. Methylation increases the termination efficiency of RF1.

It is found in the cytoplasm. Peptide chain release factor 1 directs the termination of translation in response to the peptide chain termination codons UAG and UAA. The chain is Peptide chain release factor 1 from Salmonella schwarzengrund (strain CVM19633).